Here is a 371-residue protein sequence, read N- to C-terminus: Barbiturase 1 (371 aa).

The interval 1-103 (MPDAIEVRKV…TIFATVPPED (103 aa)) is RU A. Substrate contacts are provided by residues arginine 53 and 82 to 83 (SG). The interval 115–250 (RLTVGFAMSE…AQVVVVGNAP (136 aa)) is RU B. The active site involves lysine 165. Substrate is bound by residues asparagine 197 and 233–234 (SS). Residue serine 233 is the Nucleophile of the active site. Residues 256-371 (YRIGHSVMKD…GPVAAIVDLG (116 aa)) form an RU C region. A Mg(2+)-binding site is contributed by glutamate 304. Substrate-binding positions include lysine 331 and 350-351 (SV). Mg(2+)-binding residues include alanine 353, glutamine 356, glycine 357, proline 358, and glycine 361.

Belongs to the cyclic amide hydrolase (CyAH) family. Homotetramer.

The catalysed reaction is barbiturate + H2O = 3-oxo-3-ureidopropanoate. The protein operates within pyrimidine metabolism; uracil degradation via oxidative pathway; malonate and urea from uracil: step 2/3. Inhibited by cyanuric acid. Its function is as follows. Responsible for the hydrolysis of barbituric acid (2,4,6-trihydroxy-1,3-pyrimidine), an intermediate in the oxidative catabolism of pyrimidines. Catalyzes the hydrolytic opening of the pyrimidine ring of barbituric acid to yield ureidomalonic acid. The polypeptide is Barbiturase 1 (Nocardioides sp. (strain ATCC BAA-499 / JS614)).